Consider the following 167-residue polypeptide: Translation initiation factor IF-3 (167 aa).

This sequence belongs to the IF-3 family. In terms of assembly, monomer.

It is found in the cytoplasm. IF-3 binds to the 30S ribosomal subunit and shifts the equilibrium between 70S ribosomes and their 50S and 30S subunits in favor of the free subunits, thus enhancing the availability of 30S subunits on which protein synthesis initiation begins. This chain is Translation initiation factor IF-3, found in Bacillus anthracis.